The following is a 188-amino-acid chain: FMN-dependent NADPH-azoreductase (188 aa).

The protein belongs to the azoreductase type 2 family. In terms of assembly, homotetramer. The cofactor is FMN.

In terms of biological role, catalyzes the reductive cleavage of azo bond in aromatic azo compounds to the corresponding amines. Requires NADPH, but not NADH, as an electron donor for its activity. The protein is FMN-dependent NADPH-azoreductase (azo1) of Staphylococcus saprophyticus subsp. saprophyticus (strain ATCC 15305 / DSM 20229 / NCIMB 8711 / NCTC 7292 / S-41).